A 283-amino-acid polypeptide reads, in one-letter code: NAD(P)H-hydrate epimerase (283 aa).

The N-terminal 28 residues, M1–C28, are a transit peptide targeting the mitochondrion. The 210-residue stretch at A61–L270 folds into the YjeF N-terminal domain. A (6S)-NADPHX-binding site is contributed by N115–D119. Residues N116 and D180 each contribute to the K(+) site. Residues G184–A190 and D213 each bind (6S)-NADPHX. S216 contacts K(+).

The protein belongs to the NnrE/AIBP family. In terms of assembly, homodimer. Interacts with apoa1a. Binds to high-density lipoprotein. Requires K(+) as cofactor.

It localises to the mitochondrion. Its subcellular location is the secreted. The enzyme catalyses (6R)-NADHX = (6S)-NADHX. It carries out the reaction (6R)-NADPHX = (6S)-NADPHX. Functionally, catalyzes the epimerization of the S- and R-forms of NAD(P)HX, a damaged form of NAD(P)H that is a result of enzymatic or heat-dependent hydration. This is a prerequisite for the S-specific NAD(P)H-hydrate dehydratase to allow the repair of both epimers of NAD(P)HX. In Danio rerio (Zebrafish), this protein is NAD(P)H-hydrate epimerase.